The chain runs to 172 residues: Large ribosomal subunit protein uL10 (172 aa).

The protein belongs to the universal ribosomal protein uL10 family. In terms of assembly, part of the ribosomal stalk of the 50S ribosomal subunit. The N-terminus interacts with L11 and the large rRNA to form the base of the stalk. The C-terminus forms an elongated spine to which L12 dimers bind in a sequential fashion forming a multimeric L10(L12)X complex.

In terms of biological role, forms part of the ribosomal stalk, playing a central role in the interaction of the ribosome with GTP-bound translation factors. The sequence is that of Large ribosomal subunit protein uL10 from Dinoroseobacter shibae (strain DSM 16493 / NCIMB 14021 / DFL 12).